Reading from the N-terminus, the 158-residue chain is Small ribosomal subunit protein uS10m (158 aa).

It belongs to the universal ribosomal protein uS10 family.

It localises to the mitochondrion. The protein is Small ribosomal subunit protein uS10m (mrps-10) of Caenorhabditis briggsae.